We begin with the raw amino-acid sequence, 828 residues long: Protein SEY1 homolog (828 aa).

Over 1 to 718 the chain is Cytoplasmic; the sequence is MTEDVMNDDF…SSKNGISWKN (718 aa). A GB1/RHD3-type G domain is found at 44–284; it reads GFNYNVLSIL…VPSDGFFYYA (241 aa). Position 54-61 (54-61) interacts with GTP; the sequence is GCQSSGKS. The helical transmembrane segment at 719 to 739 threads the bilayer; it reads IPPPFWILLLLCSWNELCSVL. Residues 740 to 742 lie on the Lumenal side of the membrane; sequence RIV. Residues 743–763 traverse the membrane as a helical segment; that stretch reads FKVQVLIPLIILGFIVVQYFS. Residues 764-828 are Cytoplasmic-facing; it reads HLVFGTSADA…NDSGKKAEEN (65 aa).

It belongs to the TRAFAC class dynamin-like GTPase superfamily. GB1/RHD3 GTPase family. RHD3 subfamily.

The protein localises to the endoplasmic reticulum membrane. In terms of biological role, probable GTP-binding protein that may be involved in cell development. This is Protein SEY1 homolog from Babesia bovis.